The primary structure comprises 207 residues: Inhibitor of hydrogen peroxide resistance (207 aa).

The segment at residues Met163–Ala182 is a DNA-binding region (H-T-H motif).

It belongs to the IprA family.

Functionally, involved in oxidative stress resistance. The chain is Inhibitor of hydrogen peroxide resistance from Salmonella typhimurium (strain LT2 / SGSC1412 / ATCC 700720).